A 343-amino-acid chain; its full sequence is Probable long-chain-alcohol O-fatty-acyltransferase 2 (343 aa).

8 helical membrane passes run 7–27 (NLIK…YISS), 36–56 (LLSL…FSSV), 58–78 (FCVI…FLFA), 117–137 (PMSK…LHVY), 148–168 (FAFL…ILVF), 235–255 (GMLA…FYVI), 260–280 (TWEV…EIAM), and 292–312 (AVSG…LFYP).

This sequence belongs to the wax synthase family.

The protein localises to the membrane. The enzyme catalyses a long chain fatty alcohol + a fatty acyl-CoA = a wax ester + CoA. Catalyzes the final step in the synthesis of long-chain linear esters (waxes). This chain is Probable long-chain-alcohol O-fatty-acyltransferase 2 (AT2), found in Arabidopsis thaliana (Mouse-ear cress).